Reading from the N-terminus, the 677-residue chain is Platelet glycoprotein Ib alpha chain (677 aa).

Positions 1–16 (MHLLLWLLLLARLCRP) are cleaved as a signal peptide. An LRRNT domain is found at 17–47 (EFICEVSKVTSQVEVNCDNKGLKALPPGLPG). Residues 17–564 (EFICEVSKVT…NPDLCCLLPL (548 aa)) are Extracellular-facing. A disulfide bridge connects residues Cys20 and Cys33. 6 LRR repeats span residues 72–93 (RLAQLHLRQSQLTQLQVDGMLP), 94–115 (RLETLDVSHNRLKSLPSLGRAL), 117–138 (ALTTLDASFNELVALSPGTLDG), 141–162 (HLHELYLRGNKLKTLPPRLLAP), 165–186 (QLRKLNLADNRLTELPPGFLEG), and 189–210 (ELDTLYLQGNWLRTVPKGFFGD). One can recognise an LRRCT domain in the interval 221–282 (NPWSCDCEIL…HTYQGKDCPS (62 aa)). 2 cysteine pairs are disulfide-bonded: Cys225-Cys264 and Cys227-Cys280. Tyr291 and Tyr294 each carry sulfotyrosine. O-linked (GalNAc...) threonine glycans are attached at residues Thr309, Thr319, Thr323, Thr324, Thr346, Thr354, Thr368, Thr372, Thr376, Thr377, and Thr399. Positions 359–499 (TLGPIMPTTT…EPTTTPTSPT (141 aa)) are disordered. Low complexity-rich tracts occupy residues 362–385 (PIMPTTTPEPTTPPTTLEPTTTPT), 393–403 (PTTLEPTTTPI), 411–421 (PTTLEPTTTPI), and 427–470 (TPST…TPTI). Over residues 471–485 (PELPTPPTTPEPTMP) the composition is skewed to pro residues. The span at 486–499 (PTTLEPTTTPTSPT) shows a compositional bias: low complexity. O-linked (GalNAc...) threonine glycosylation is present at Thr487. Ser497 carries an O-linked (GalNAc...) serine glycan. Thr500 is a glycosylation site (O-linked (GalNAc...) threonine). O-linked (GalNAc...) serine glycosylation is present at Ser523. The helical transmembrane segment at 565 to 585 (GFYILGLLWLLFASVVLILLL) threads the bilayer. Residues 586–677 (TWAQHVKPQA…VGVRYSSHSL (92 aa)) lie on the Cytoplasmic side of the membrane. Residues Ser654 and Ser657 each carry the phosphoserine modification.

In terms of assembly, two GP-Ib beta are disulfide-linked to one GP-Ib alpha. GP-IX is complexed with the GP-Ib heterodimer via a non covalent linkage. Interacts with FLNB. Interacts with FLNA (via filamin repeats 4, 9, 12, 17, 19, 21, and 23). O-glycosylated. Post-translationally, glycocalicin is the product of a proteolytic cleavage/shedding, catalyzed by ADAM17, which releases most of the extracellular domain. Binding sites for vWF and thrombin are in this part of the protein.

The protein localises to the membrane. GP-Ib, a surface membrane protein of platelets, participates in the formation of platelet plugs by binding to the A1 domain of vWF, which is already bound to the subendothelium. The chain is Platelet glycoprotein Ib alpha chain (GP1BA) from Canis lupus familiaris (Dog).